The following is a 204-amino-acid chain: Holliday junction branch migration complex subunit RuvA (204 aa).

The domain I stretch occupies residues 1–64; it reads MIGRLRGTLI…EDAQLLYGFN (64 aa). Positions 65 to 143 are domain II; sequence TVSERALFRE…GWGAGDLFTP (79 aa). Residues 144-155 form a flexible linker region; sequence ATDAAPVDSTPV. The segment at 156–204 is domain III; the sequence is IAQNAQEEAMSALLALGYKPPQASKAVSQVAKAGMSSEELIREALKSMV.

This sequence belongs to the RuvA family. Homotetramer. Forms an RuvA(8)-RuvB(12)-Holliday junction (HJ) complex. HJ DNA is sandwiched between 2 RuvA tetramers; dsDNA enters through RuvA and exits via RuvB. An RuvB hexamer assembles on each DNA strand where it exits the tetramer. Each RuvB hexamer is contacted by two RuvA subunits (via domain III) on 2 adjacent RuvB subunits; this complex drives branch migration. In the full resolvosome a probable DNA-RuvA(4)-RuvB(12)-RuvC(2) complex forms which resolves the HJ.

It is found in the cytoplasm. Functionally, the RuvA-RuvB-RuvC complex processes Holliday junction (HJ) DNA during genetic recombination and DNA repair, while the RuvA-RuvB complex plays an important role in the rescue of blocked DNA replication forks via replication fork reversal (RFR). RuvA specifically binds to HJ cruciform DNA, conferring on it an open structure. The RuvB hexamer acts as an ATP-dependent pump, pulling dsDNA into and through the RuvAB complex. HJ branch migration allows RuvC to scan DNA until it finds its consensus sequence, where it cleaves and resolves the cruciform DNA. In Vibrio cholerae serotype O1 (strain ATCC 39541 / Classical Ogawa 395 / O395), this protein is Holliday junction branch migration complex subunit RuvA.